Here is a 275-residue protein sequence, read N- to C-terminus: Alpha-aminoadipate--LysW ligase LysX (275 aa).

ATP contacts are provided by residues Lys-81, Lys-121, 125-131 (GSWGRMV), 161-172 (QEFVNKPNRDIR), Arg-186, and Asn-195. One can recognise an ATP-grasp domain in the interval 85-270 (TYILARHNIP…VSKFLLEKAA (186 aa)). Mg(2+)-binding residues include Asp-230, Glu-243, and Asn-245. The N-[TS] motif that is essential for LysX substrate specificity signature appears at 252 to 253 (NT).

Belongs to the RimK family. LysX subfamily. Homodimer. Requires Mg(2+) as cofactor.

The enzyme catalyses [amino-group carrier protein]-C-terminal-L-glutamate + L-2-aminoadipate + ATP = [amino-group carrier protein]-C-terminal-N-(1,4-dicarboxybutan-1-yl)-L-glutamine + ADP + phosphate + H(+). Its pathway is amino-acid biosynthesis; L-lysine biosynthesis via AAA pathway; L-lysine from L-alpha-aminoadipate (Thermus route): step 1/5. Functionally, catalyzes the ATP-dependent formation of a covalent bond between the amino group of alpha-aminoadipate (AAA) and the gamma-carboxyl group of the C-terminal glutamate residue in LysW. This chain is Alpha-aminoadipate--LysW ligase LysX (lysX), found in Saccharolobus solfataricus (strain ATCC 35092 / DSM 1617 / JCM 11322 / P2) (Sulfolobus solfataricus).